The following is a 66-amino-acid chain: Large ribosomal subunit protein bL33c (66 aa).

It belongs to the bacterial ribosomal protein bL33 family.

The protein resides in the plastid. Its subcellular location is the chloroplast. The sequence is that of Large ribosomal subunit protein bL33c from Vitis vinifera (Grape).